Here is a 434-residue protein sequence, read N- to C-terminus: MQFIDRCQIKLIAGNGGDGIIAWRREAHYDKGGPAGGSGGKGGNIILVADHNQSTLLSLKYSKIIRASNGDNGKPDLSSGQNGMDKYVKVPIGTTVYDEQTNEVIVDLIRDKQEYIICHGGKGGRGNAAFKSSTLRAPNLYELGDEGEEKTVRLELKYLANVGIVGYPNAGKSTLISKLSNAKPKIANYQFTTLVPILGIVENNDKRLVFADIPGLIENASEGYGLGHDFLRHVERCEVLIHLISMNPLDHDDVIDAYEKIMTELRKYSQLLVNKKMLVVANKMDVEGASENFNKLRSYLAKKGIDISSISAINGDVNNLVDRVFDLYQKTLSTTTETNPFSIPMVAEKVYYYDGEKTIDDDPLDVIKDGENRWIVSSKKLTYWFKKIPQTTLDNITRLGQKIKSLGVEDQLKKMGAKPNDVIVICDYEYLIDE.

An Obg domain is found at 1–159 (MQFIDRCQIK…KTVRLELKYL (159 aa)). The OBG-type G domain maps to 160–329 (ANVGIVGYPN…LVDRVFDLYQ (170 aa)). GTP contacts are provided by residues 166–173 (GYPNAGKS), 191–195 (FTTLV), 212–215 (DIPG), 282–285 (NKMD), and 310–312 (ISA). Residues serine 173 and threonine 193 each contribute to the Mg(2+) site. The OCT domain occupies 356–434 (EKTIDDDPLD…ICDYEYLIDE (79 aa)).

Belongs to the TRAFAC class OBG-HflX-like GTPase superfamily. OBG GTPase family. As to quaternary structure, monomer. The cofactor is Mg(2+).

The protein resides in the cytoplasm. Its function is as follows. An essential GTPase which binds GTP, GDP and possibly (p)ppGpp with moderate affinity, with high nucleotide exchange rates and a fairly low GTP hydrolysis rate. Plays a role in control of the cell cycle, stress response, ribosome biogenesis and in those bacteria that undergo differentiation, in morphogenesis control. The sequence is that of GTPase Obg from Mycoplasmoides gallisepticum (strain R(low / passage 15 / clone 2)) (Mycoplasma gallisepticum).